The following is a 324-amino-acid chain: DGAT1/2-independent enzyme synthesizing storage lipids (324 aa).

The Lumenal segment spans residues 1–50; it reads MIDKNQTCGVGQDSVPYMICLIHILEEWFGVEQLEDYLNFANYLLWVFTP. Asn-5 is a glycosylation site (N-linked (GlcNAc...) asparagine). Residues 51–71 form a helical membrane-spanning segment; that stretch reads LILLILPYFTIFLLYLTIIFL. Over 72-125 the chain is Cytoplasmic; sequence HIYKRKNVLKEAYSHNLWDGARKTVATLWDGHAAVWHGYEVHGMEKIPEDGPAL. The chain crosses the membrane as a helical span at residues 126 to 146; the sequence is IIFYHGAIPIDFYYFMAKIFI. The active site involves His-130. Residues 147-324 are Lumenal-facing; that stretch reads HKGRTCRVVA…IMSALLERFH (178 aa).

Belongs to the diacylglycerol acyltransferase family. Highly divergent.

It is found in the endoplasmic reticulum membrane. It carries out the reaction a 1,2-diacylglycerol + a 1,2-diacyl-sn-glycero-3-phosphocholine = a triacylglycerol + a 1-acyl-sn-glycero-3-phosphocholine. The enzyme catalyses a 1-O-alkyl-2-acyl-sn-glycero-3-phosphocholine + a 1,2-diacylglycerol = a 1-O-alkyl-sn-glycero-3-phosphocholine + a triacylglycerol. It catalyses the reaction a 2-acylglycerol + an acyl-CoA = a 1,2-diacylglycerol + CoA. The catalysed reaction is an acyl-CoA + a 1,2-diacyl-sn-glycerol = a triacyl-sn-glycerol + CoA. It carries out the reaction 2-(9Z-octadecenoyl)-glycerol + (9Z)-octadecenoyl-CoA = 1,2-di-(9Z-octadecenoyl)-glycerol + CoA. The enzyme catalyses 1,2-di-(9Z-octadecenoyl)-sn-glycerol + (9Z)-octadecenoyl-CoA = 1,2,3-tri-(9Z-octadecenoyl)-glycerol + CoA. With respect to regulation, acyltransferase activity is specifically inhibited by TMX1 at the endoplasmic reticulum, restricting accumulation of triacylglycerol. Functionally, catalytic subunit of the alternative triglyceride biosynthesis pathway, which mediates formation of triacylglycerol from diacylglycerol and membrane phospholipids. Synthesizes triacylglycerol at the expense of membrane phospholipids, such as phosphatidylcholine (PC) and its ether-linked form (ePC), thereby altering the composition of membranes. The alternative triglyceride biosynthesis pathway is probably required to provide the energy required for rapid growth when fuel sources are limiting. It maintains mitochondrial function during periods of extracellular lipid starvation. Can also use acyl-CoA as donor: acts as a acyl-CoA:monoacylglycerol acyltransferase (MGAT), but also shows acyl-CoA:diacylglycerol acyltransferase (DGAT) activity. The polypeptide is DGAT1/2-independent enzyme synthesizing storage lipids (Homo sapiens (Human)).